A 488-amino-acid polypeptide reads, in one-letter code: MTFNNKTIEELHNLLVSKEISATELTQATLENIKSREEALNSFVTIAEEQALVQAKAIDEAGIDADNVLSGIPLAVKDNISTDGILTTAASKMLYNYEPIFDATAVANAKTKGMIVVGKTNMDEFAMGGSGETSHYGATKNAWNHSKVPGGSSSGSAAAVASGQVRLSLGSDTGGSIRQPAAFNGIVGLKPTYGTVSRFGLIAFGSSLDQIGPFAPTVKENALLLNAIASEDAKDSTSAPVRIADFTSKIGQDIKGMKIALPKEYLGEGIDPEVKETILNAAKHFEKLGAIVEEVSLPHSKYGVAVYYIIASSEASSNLQRFDGIRYGYRAEDATNLDEIYVNSRSQGFGEEVKRRIMLGTFSLSSGYYDAYYKKAGQVRTLIIQDFEKVFADYDLILGPTAPSVAYDLDSLNHDPVAMYLADLLTIPVNLAGLPGISIPAGFSQGLPVGLQLIGPKYSEETIYQAAAAFEATTDYHKQQPVIFGGDN.

Active-site charge relay system residues include Lys-77 and Ser-152. The active-site Acyl-ester intermediate is Ser-176.

This sequence belongs to the amidase family. GatA subfamily. In terms of assembly, heterotrimer of A, B and C subunits.

It carries out the reaction L-glutamyl-tRNA(Gln) + L-glutamine + ATP + H2O = L-glutaminyl-tRNA(Gln) + L-glutamate + ADP + phosphate + H(+). Its function is as follows. Allows the formation of correctly charged Gln-tRNA(Gln) through the transamidation of misacylated Glu-tRNA(Gln) in organisms which lack glutaminyl-tRNA synthetase. The reaction takes place in the presence of glutamine and ATP through an activated gamma-phospho-Glu-tRNA(Gln). The protein is Glutamyl-tRNA(Gln) amidotransferase subunit A of Streptococcus pneumoniae (strain JJA).